We begin with the raw amino-acid sequence, 143 residues long: AP-2 complex subunit sigma (143 aa).

The protein belongs to the adaptor complexes small subunit family. As to quaternary structure, adaptor protein complex 2 (AP-2) is a heterotetramer composed of two large adaptins (alpha-type subunit APL3 and beta-type subunit APL1), a medium chain (mu-type subunit APM4) and a small adaptin (sigma-type subunit APS2).

The protein resides in the cell membrane. It localises to the membrane. Its subcellular location is the coated pit. Its function is as follows. Component of the adaptor complexes which link clathrin to receptors in coated vesicles. Clathrin-associated protein complexes are believed to interact with the cytoplasmic tails of membrane proteins, leading to their selection and concentration. The chain is AP-2 complex subunit sigma (aps-2) from Neurospora crassa (strain ATCC 24698 / 74-OR23-1A / CBS 708.71 / DSM 1257 / FGSC 987).